A 297-amino-acid chain; its full sequence is 4-hydroxy-tetrahydrodipicolinate synthase (297 aa).

Position 46 (threonine 46) interacts with pyruvate. The active-site Proton donor/acceptor is the tyrosine 134. Lysine 162 acts as the Schiff-base intermediate with substrate in catalysis. Isoleucine 204 contacts pyruvate.

It belongs to the DapA family. As to quaternary structure, homotetramer; dimer of dimers.

It localises to the cytoplasm. The catalysed reaction is L-aspartate 4-semialdehyde + pyruvate = (2S,4S)-4-hydroxy-2,3,4,5-tetrahydrodipicolinate + H2O + H(+). The protein operates within amino-acid biosynthesis; L-lysine biosynthesis via DAP pathway; (S)-tetrahydrodipicolinate from L-aspartate: step 3/4. Catalyzes the condensation of (S)-aspartate-beta-semialdehyde [(S)-ASA] and pyruvate to 4-hydroxy-tetrahydrodipicolinate (HTPA). The sequence is that of 4-hydroxy-tetrahydrodipicolinate synthase from Stenotrophomonas maltophilia (strain K279a).